Reading from the N-terminus, the 217-residue chain is Coiled-coil domain-containing protein 124 (217 aa).

Residues 1-95 (MPKKFQGENT…IKPAAPSKVT (95 aa)) are disordered. Composition is skewed to basic and acidic residues over residues 18–45 (RKAE…DDKH) and 52–74 (RKED…QRLL). Residues 45 to 115 (HVMRKGQRKE…EEEEKAISEK (71 aa)) adopt a coiled-coil conformation.

The protein belongs to the CCDC124 family. Associates with translationally inactive ribosomes in the nonrotated state.

The protein resides in the cytoplasm. It localises to the cytoskeleton. The protein localises to the microtubule organizing center. Its subcellular location is the centrosome. It is found in the midbody. Ribosome-binding protein involved in ribosome hibernation: associates with translationally inactive ribosomes and stabilizes the nonrotated conformation of the 80S ribosome, thereby promoting ribosome preservation and storage. The polypeptide is Coiled-coil domain-containing protein 124 (ccdc124) (Xenopus tropicalis (Western clawed frog)).